The primary structure comprises 400 residues: Acetate kinase (400 aa).

Position 8 (N8) interacts with Mg(2+). K15 provides a ligand contact to ATP. R89 provides a ligand contact to substrate. Catalysis depends on D146, which acts as the Proton donor/acceptor. ATP is bound by residues 206 to 210 (HVGNG), 283 to 285 (DMR), and 331 to 335 (GMGEN). Residue E383 coordinates Mg(2+).

This sequence belongs to the acetokinase family. Homodimer. The cofactor is Mg(2+). Requires Mn(2+) as cofactor.

It localises to the cytoplasm. The catalysed reaction is acetate + ATP = acetyl phosphate + ADP. The protein operates within metabolic intermediate biosynthesis; acetyl-CoA biosynthesis; acetyl-CoA from acetate: step 1/2. In terms of biological role, catalyzes the formation of acetyl phosphate from acetate and ATP. Can also catalyze the reverse reaction. The chain is Acetate kinase from Streptococcus equi subsp. zooepidemicus (strain MGCS10565).